The sequence spans 156 residues: 6,7-dimethyl-8-ribityllumazine synthase (156 aa).

Residues Phe22, 57 to 59 (AYE), and 81 to 83 (TVI) contribute to the 5-amino-6-(D-ribitylamino)uracil site. 86-87 (GT) lines the (2S)-2-hydroxy-3-oxobutyl phosphate pocket. The active-site Proton donor is the His89. Phe114 is a 5-amino-6-(D-ribitylamino)uracil binding site. Arg128 is a binding site for (2S)-2-hydroxy-3-oxobutyl phosphate.

It belongs to the DMRL synthase family. In terms of assembly, forms an icosahedral capsid composed of 60 subunits, arranged as a dodecamer of pentamers.

It catalyses the reaction (2S)-2-hydroxy-3-oxobutyl phosphate + 5-amino-6-(D-ribitylamino)uracil = 6,7-dimethyl-8-(1-D-ribityl)lumazine + phosphate + 2 H2O + H(+). Its pathway is cofactor biosynthesis; riboflavin biosynthesis; riboflavin from 2-hydroxy-3-oxobutyl phosphate and 5-amino-6-(D-ribitylamino)uracil: step 1/2. In terms of biological role, catalyzes the formation of 6,7-dimethyl-8-ribityllumazine by condensation of 5-amino-6-(D-ribitylamino)uracil with 3,4-dihydroxy-2-butanone 4-phosphate. This is the penultimate step in the biosynthesis of riboflavin. The chain is 6,7-dimethyl-8-ribityllumazine synthase from Proteus mirabilis (strain HI4320).